The following is a 268-amino-acid chain: WUSCHEL-related homeobox 11 (268 aa).

Residues 1–35 are disordered; that stretch reads MDQEQTPHSPTRHSRSPPSSASGSTSAEPVRSRWS. Positions 16–27 are enriched in low complexity; sequence SPPSSASGSTSA. The homeobox; WUS-type DNA-binding region spans 29-93; that stretch reads PVRSRWSPKP…NRRSRSRRRQ (65 aa).

The protein belongs to the WUS homeobox family.

It is found in the nucleus. Transcription factor which may be involved in developmental processes. This chain is WUSCHEL-related homeobox 11 (WOX11), found in Arabidopsis thaliana (Mouse-ear cress).